The following is a 156-amino-acid chain: Small ribosomal subunit protein uS7 (156 aa).

It belongs to the universal ribosomal protein uS7 family. Part of the 30S ribosomal subunit. Contacts proteins S9 and S11.

Functionally, one of the primary rRNA binding proteins, it binds directly to 16S rRNA where it nucleates assembly of the head domain of the 30S subunit. Is located at the subunit interface close to the decoding center, probably blocks exit of the E-site tRNA. The chain is Small ribosomal subunit protein uS7 from Acidobacterium capsulatum (strain ATCC 51196 / DSM 11244 / BCRC 80197 / JCM 7670 / NBRC 15755 / NCIMB 13165 / 161).